A 136-amino-acid polypeptide reads, in one-letter code: Urease subunit beta (136 aa).

The interval 113–136 (NDEYAGVFGDNGAENVNKKGGKRS) is disordered.

Belongs to the urease beta subunit family. In terms of assembly, heterotrimer of UreA (gamma), UreB (beta) and UreC (alpha) subunits. Three heterotrimers associate to form the active enzyme.

It localises to the cytoplasm. The enzyme catalyses urea + 2 H2O + H(+) = hydrogencarbonate + 2 NH4(+). Its pathway is nitrogen metabolism; urea degradation; CO(2) and NH(3) from urea (urease route): step 1/1. This chain is Urease subunit beta, found in Staphylococcus aureus (strain USA300).